The primary structure comprises 838 residues: 1,4-alpha-glucan branching enzyme GlgB 1 (838 aa).

A compositionally biased stretch (basic and acidic residues) spans 1–11 (MIPRPPSDDRA). Disordered regions lie at residues 1 to 98 (MIPR…VSKK) and 116 to 142 (PVSPAVAPDDRDRLLSGTHHAPHSVLG). Residues 29 to 57 (KKAAAAKKTAGKKATPAAKATAAKGAVTK) are compositionally biased toward low complexity. Aspartate 513 serves as the catalytic Nucleophile. The Proton donor role is filled by glutamate 566. The disordered stretch occupies residues 793-822 (TDGARYGGSDVTNPHPVKPEPQGRHGRPAS).

It belongs to the glycosyl hydrolase 13 family. GlgB subfamily. In terms of assembly, monomer.

It carries out the reaction Transfers a segment of a (1-&gt;4)-alpha-D-glucan chain to a primary hydroxy group in a similar glucan chain.. Its pathway is glycan biosynthesis; glycogen biosynthesis. Functionally, catalyzes the formation of the alpha-1,6-glucosidic linkages in glycogen by scission of a 1,4-alpha-linked oligosaccharide from growing alpha-1,4-glucan chains and the subsequent attachment of the oligosaccharide to the alpha-1,6 position. The protein is 1,4-alpha-glucan branching enzyme GlgB 1 of Streptomyces avermitilis (strain ATCC 31267 / DSM 46492 / JCM 5070 / NBRC 14893 / NCIMB 12804 / NRRL 8165 / MA-4680).